The following is a 1256-amino-acid chain: Bifunctional autolysin (1256 aa).

An N-terminal signal peptide occupies residues 1-29; the sequence is MAKKFNYKLPSMVALTLVGSAVTAHQVQA. The segment covering 103–138 has biased composition (polar residues); sequence GDTRANQSATTNNTQPVAKSTSTTAPKTNTNVTNAG. 3 disordered regions span residues 103–151, 172–214, and 419–440; these read GDTR…NSEN, KTAA…KTSL, and TQSTTTPTTPSKPTTPSKPSTG. Composition is skewed to low complexity over residues 172 to 196 and 421 to 439; these read KTAAPKAATTSAPKAKTEATPKVTT and STTTPTTPSKPTTPSKPST. An N-acetylmuramoyl-L-alanine amidase region spans residues 199 to 775; the sequence is ASAQPRSVAA…AVAQPKTAVK (577 aa). 7 GW domains span residues 443–517, 519–593, 612–686, 688–762, 784–859, 861–936, and 943–1017; these read TVAA…YNTA, SPVN…DTAK, TVSS…YNNA, SPVN…VPAA, TTQT…VQNL, KEVK…APTA, and AAKD…KELI. An endo-beta-N-acetylglucosaminidase region spans residues 776–1256; sequence AYTVTKPQTT…GKYFDIPQYK (481 aa).

It in the N-terminal section; belongs to the N-acetylmuramoyl-L-alanine amidase 2 family. The protein in the C-terminal section; belongs to the glycosyl hydrolase 73 family. As to quaternary structure, oligomer; forms a ring structure at the cell surface which is important for efficient partitioning of daughter cells after cell division. Undergoes proteolytic processing to generate the two extracellular lytic enzymes, probably at the septal region on the cell surface.

It localises to the secreted. It carries out the reaction Hydrolyzes the link between N-acetylmuramoyl residues and L-amino acid residues in certain cell-wall glycopeptides.. The catalysed reaction is an N(4)-(oligosaccharide-(1-&gt;3)-[oligosaccharide-(1-&gt;6)]-beta-D-Man-(1-&gt;4)-beta-D-GlcNAc-(1-&gt;4)-alpha-D-GlcNAc)-L-asparaginyl-[protein] + H2O = an oligosaccharide-(1-&gt;3)-[oligosaccharide-(1-&gt;6)]-beta-D-Man-(1-&gt;4)-D-GlcNAc + N(4)-(N-acetyl-beta-D-glucosaminyl)-L-asparaginyl-[protein]. Functionally, endohydrolysis of the di-N-acetylchitobiosyl unit in high-mannose glycopeptides and glycoproteins containing the -[(Man)5(GlcNAc)2]-Asn structure. One N-acetyl-D-glucosamine residue remains attached to the protein; the rest of the oligosaccharide is released intact. Cleaves the peptidoglycan connecting the daughter cells at the end of the cell division cycle, resulting in the separation of the two newly divided cells. Acts as an autolysin in penicillin-induced lysis. This is Bifunctional autolysin (atl) from Staphylococcus aureus (strain NCTC 8325 / PS 47).